A 67-amino-acid polypeptide reads, in one-letter code: Large ribosomal subunit protein bL35 (67 aa).

It belongs to the bacterial ribosomal protein bL35 family.

The protein is Large ribosomal subunit protein bL35 of Anaeromyxobacter sp. (strain Fw109-5).